A 551-amino-acid polypeptide reads, in one-letter code: Calcium-dependent protein kinase 19 (551 aa).

A lipid anchor (N-myristoyl glycine) is attached at Gly-2. The disordered stretch occupies residues 12 to 46 (VKKPTPDISGEQNTEVKSREITPKEQPRQRQPAPR). The span at 25 to 39 (TEVKSREITPKEQPR) shows a compositional bias: basic and acidic residues. A Protein kinase domain is found at 98–357 (YSLGRELGRG…AAQVLEHPWI (260 aa)). Residues 104–112 (LGRGQFGIT) and Lys-127 each bind ATP. Asp-222 (proton acceptor) is an active-site residue. The residue at position 263 (Ser-263) is a Phosphoserine. The autoinhibitory domain stretch occupies residues 363–393 (ASDKPIDSAVLSRMKQLRAMNKLKKLAFKFI). EF-hand domains are found at residues 400–435 (EELK…LGSR), 436–471 (LTET…RFRV), 472–507 (ERED…YNMG), and 512–542 (IKEI…CSQS). 19 residues coordinate Ca(2+): Asp-413, Asp-415, Ser-417, Thr-419, Glu-424, Asp-449, Asp-451, Asn-453, Thr-455, Glu-460, Asp-485, Asp-487, Ser-489, Glu-496, Asp-520, Asp-522, Asp-524, Ser-526, and Glu-531.

This sequence belongs to the protein kinase superfamily. Ser/Thr protein kinase family. CDPK subfamily.

It is found in the membrane. The catalysed reaction is L-seryl-[protein] + ATP = O-phospho-L-seryl-[protein] + ADP + H(+). The enzyme catalyses L-threonyl-[protein] + ATP = O-phospho-L-threonyl-[protein] + ADP + H(+). Activated by calcium. Autophosphorylation may play an important role in the regulation of the kinase activity. Its function is as follows. May play a role in signal transduction pathways that involve calcium as a second messenger. The chain is Calcium-dependent protein kinase 19 (CPK19) from Arabidopsis thaliana (Mouse-ear cress).